Consider the following 157-residue polypeptide: Large ribosomal subunit protein uL11 (157 aa).

This sequence belongs to the universal ribosomal protein uL11 family. In terms of assembly, part of the ribosomal stalk of the 50S ribosomal subunit. Interacts with L10 and the large rRNA to form the base of the stalk. L10 forms an elongated spine to which L12 dimers bind in a sequential fashion forming a multimeric L10(L12)X complex.

In terms of biological role, forms part of the ribosomal stalk which helps the ribosome interact with GTP-bound translation factors. The polypeptide is Large ribosomal subunit protein uL11 (Archaeoglobus fulgidus (strain ATCC 49558 / DSM 4304 / JCM 9628 / NBRC 100126 / VC-16)).